We begin with the raw amino-acid sequence, 286 residues long: Probable endonuclease 4 (286 aa).

Residues histidine 67, histidine 107, glutamate 146, aspartate 180, histidine 183, histidine 217, aspartate 230, histidine 232, and glutamate 262 each coordinate Zn(2+).

This sequence belongs to the AP endonuclease 2 family. Zn(2+) is required as a cofactor.

It carries out the reaction Endonucleolytic cleavage to 5'-phosphooligonucleotide end-products.. In terms of biological role, endonuclease IV plays a role in DNA repair. It cleaves phosphodiester bonds at apurinic or apyrimidinic (AP) sites, generating a 3'-hydroxyl group and a 5'-terminal sugar phosphate. This Methanosphaerula palustris (strain ATCC BAA-1556 / DSM 19958 / E1-9c) protein is Probable endonuclease 4.